A 72-amino-acid chain; its full sequence is Translation initiation factor IF-1 (72 aa).

Residues 1-72 enclose the S1-like domain; sequence MTKEDSFEMH…SKGRIIFRSR (72 aa).

It belongs to the IF-1 family. Component of the 30S ribosomal translation pre-initiation complex which assembles on the 30S ribosome in the order IF-2 and IF-3, IF-1 and N-formylmethionyl-tRNA(fMet); mRNA recruitment can occur at any time during PIC assembly.

Its subcellular location is the cytoplasm. In terms of biological role, one of the essential components for the initiation of protein synthesis. Stabilizes the binding of IF-2 and IF-3 on the 30S subunit to which N-formylmethionyl-tRNA(fMet) subsequently binds. Helps modulate mRNA selection, yielding the 30S pre-initiation complex (PIC). Upon addition of the 50S ribosomal subunit IF-1, IF-2 and IF-3 are released leaving the mature 70S translation initiation complex. This is Translation initiation factor IF-1 from Blochmanniella pennsylvanica (strain BPEN).